Reading from the N-terminus, the 151-residue chain is Sperm surface protein Sp17 (151 aa).

The span at 68-98 (FYNNHAFEEQEPPEKSDPKQEESQIPGKEEE) shows a compositional bias: basic and acidic residues. Disordered regions lie at residues 68–115 (FYNN…EKEE) and 130–151 (AREEVKKMKTDSLQNEEKEENK). Residues 114–143 (EEVAAVKIQAAFRGHVAREEVKKMKTDSLQ) enclose the IQ domain.

Homodimer. May interact with ROPN1. In terms of tissue distribution, testis- and sperm-specific.

The protein localises to the membrane. In terms of biological role, sperm surface zona pellucida binding protein. Helps to bind spermatozoa to the zona pellucida with high affinity. Might function in binding zona pellucida and carbohydrates. This Macaca fascicularis (Crab-eating macaque) protein is Sperm surface protein Sp17 (SPA17).